The primary structure comprises 108 residues: UPF0145 protein Acel_2109 (108 aa).

The protein belongs to the UPF0145 family.

In Acidothermus cellulolyticus (strain ATCC 43068 / DSM 8971 / 11B), this protein is UPF0145 protein Acel_2109.